Consider the following 388-residue polypeptide: MGRVGVLLLNLGGPDKLEDVGPFLYNLFSDPEIIRLPFRWLQKPLAWFIASRRTRTSQQNYKQIGGGSPLRRITEAQGEALKKQLGYLGQEANIYVGMRYWHPYTEEAIAQITQDNIEHLVILPLYPQFSISTSGSSFRLLDKLWQEEPKLQPIEYTVIPSWYKQPGYLQAMAELIAQELEQFPNPDEVHIFFSAHGVPKSYVEEAGDPYQQEIEECTALIMQTLNRPNAHTLAYQSRVGPVEWLQPYTEDALKELGAQGVKDLVVVPISFVSEHIETLQEIDIEYREVAEESGIHNFRRVPAPNTHPVFINALAELVIDALKNPSFKLSQAAQMKKMVKMYPQERWEWGLTTSAEVWNGRIAMLGFIALIIELITGHGFLHMIGLLQ.

The Fe cation site is built by histidine 196 and glutamate 277.

Belongs to the ferrochelatase family.

Its subcellular location is the cytoplasm. It catalyses the reaction heme b + 2 H(+) = protoporphyrin IX + Fe(2+). It functions in the pathway porphyrin-containing compound metabolism; protoheme biosynthesis; protoheme from protoporphyrin-IX: step 1/1. Its function is as follows. Catalyzes the ferrous insertion into protoporphyrin IX. This chain is Ferrochelatase, found in Nostoc punctiforme (strain ATCC 29133 / PCC 73102).